The sequence spans 87 residues: U3-theraphotoxin-Hhn1a 16 (87 aa).

The signal sequence occupies residues 1–24 (MVNMKASMFLTFAGLVLLFVVCYA). Residues 25–52 (SESEEKEFPKEMLSSIFAVDNDFKQGER) constitute a propeptide that is removed on maturation. Disulfide bonds link cysteine 54-cysteine 67, cysteine 61-cysteine 72, and cysteine 66-cysteine 79.

It belongs to the neurotoxin 10 (Hwtx-1) family. 51 (Hntx-8) subfamily. Hntx-8 sub-subfamily. In terms of tissue distribution, expressed by the venom gland.

It is found in the secreted. Its function is as follows. Ion channel inhibitor. This is U3-theraphotoxin-Hhn1a 16 from Cyriopagopus hainanus (Chinese bird spider).